The chain runs to 1588 residues: Ubiquitin carboxyl-terminal hydrolase 54 (1588 aa).

Arg12 carries the omega-N-methylarginine modification. The USP domain occupies 31–352 (KGLSNEPGQN…QPLLLLYADP (322 aa)). The active-site Nucleophile is the Cys42. The Zn(2+) site is built by His67, Cys69, Cys74, Cys77, His133, Cys145, Cys150, His153, Cys166, Cys169, Cys225, and Cys229. The active-site Proton acceptor is the His302. Basic and acidic residues-rich tracts occupy residues 380–391 (DSGHLTDSECNQ) and 424–434 (SEGETLKEKQA). Disordered stretches follow at residues 380–447 (DSGH…TSRL) and 459–519 (HSRP…PTWR). Ser424 bears the Phosphoserine mark. Composition is skewed to polar residues over residues 436–445 (RNASKSSSTS) and 459–471 (HSRPSLASQTNAA). Over residues 499–512 (TESTSSEARSSSSS) the composition is skewed to low complexity. A phosphoserine mark is found at Ser574, Ser613, and Ser616. Positions 601-616 (ESGYESSERNSSSPVS) are enriched in low complexity. The tract at residues 601 to 620 (ESGYESSERNSSSPVSLDAA) is disordered. A coiled-coil region spans residues 678–712 (TSKSELDELQEEVARRAQEQELRKKREKELEAAKG). Disordered regions lie at residues 801–839 (RSLQDRMQQQPPSQQPVQPSASLPSQGGGLPQPTSEQSV), 856–895 (DSELGATSPFFHSPASCPEPHSSLVSPSPAQSVSQHSPPG), 950–969 (EDNSCCSKFPPQEGRDTTQD), 1093–1172 (TRDV…SRRR), and 1525–1562 (GSVLGSRTPGPRRIDVPPDDDGRQSQYPSQYRHRSAGE). The segment covering 808-825 (QQQPPSQQPVQPSASLPS) has biased composition (low complexity). A compositionally biased stretch (polar residues) spans 878-895 (SLVSPSPAQSVSQHSPPG). A Phosphoserine modification is found at Ser1138. The span at 1536–1547 (RRIDVPPDDDGR) shows a compositional bias: basic and acidic residues.

This sequence belongs to the peptidase C19 family.

It carries out the reaction Thiol-dependent hydrolysis of ester, thioester, amide, peptide and isopeptide bonds formed by the C-terminal Gly of ubiquitin (a 76-residue protein attached to proteins as an intracellular targeting signal).. In terms of biological role, deubiquitinase that specifically mediates 'Lys-63'-linked deubiquitination of substrates with a polyubiquitin chain composed of at least 3 ubiquitins. Specifically recognizes ubiquitin chain in position S2 and catalyzes cleavage of polyubiquitin within 'Lys-63'-linked chains. Not able to deubiquitinate substrates with shorter ubiquitin chains. Mediates deubiquitination of PLK4, maintaining PLK4 stability by reducing its ubiquitination-mediated degradation. The sequence is that of Ubiquitin carboxyl-terminal hydrolase 54 (Usp54) from Rattus norvegicus (Rat).